The following is a 162-amino-acid chain: Cyclic pyranopterin monophosphate synthase (162 aa).

Substrate-binding positions include 75 to 77 (LCH) and 113 to 114 (ME). Asp-128 is an active-site residue.

The protein belongs to the MoaC family. Homohexamer; trimer of dimers.

The catalysed reaction is (8S)-3',8-cyclo-7,8-dihydroguanosine 5'-triphosphate = cyclic pyranopterin phosphate + diphosphate. The protein operates within cofactor biosynthesis; molybdopterin biosynthesis. In terms of biological role, catalyzes the conversion of (8S)-3',8-cyclo-7,8-dihydroguanosine 5'-triphosphate to cyclic pyranopterin monophosphate (cPMP). In Burkholderia vietnamiensis (strain G4 / LMG 22486) (Burkholderia cepacia (strain R1808)), this protein is Cyclic pyranopterin monophosphate synthase.